We begin with the raw amino-acid sequence, 283 residues long: Formamidopyrimidine-DNA glycosylase (283 aa).

Pro-2 functions as the Schiff-base intermediate with DNA in the catalytic mechanism. Catalysis depends on Glu-3, which acts as the Proton donor. The Proton donor; for beta-elimination activity role is filled by Lys-58. Residues His-100, Arg-119, and Arg-162 each contribute to the DNA site. Residues 247–283 form an FPG-type zinc finger; it reads DVYGREGAPCKGEGCTGQIKRIVQSGRSSFYCAQCQR. The Proton donor; for delta-elimination activity role is filled by Arg-273.

The protein belongs to the FPG family. As to quaternary structure, monomer. Zn(2+) serves as cofactor.

The enzyme catalyses Hydrolysis of DNA containing ring-opened 7-methylguanine residues, releasing 2,6-diamino-4-hydroxy-5-(N-methyl)formamidopyrimidine.. It catalyses the reaction 2'-deoxyribonucleotide-(2'-deoxyribose 5'-phosphate)-2'-deoxyribonucleotide-DNA = a 3'-end 2'-deoxyribonucleotide-(2,3-dehydro-2,3-deoxyribose 5'-phosphate)-DNA + a 5'-end 5'-phospho-2'-deoxyribonucleoside-DNA + H(+). Involved in base excision repair of DNA damaged by oxidation or by mutagenic agents. Acts as a DNA glycosylase that recognizes and removes damaged bases. Has a preference for oxidized purines, such as 7,8-dihydro-8-oxoguanine (8-oxoG). Has AP (apurinic/apyrimidinic) lyase activity and introduces nicks in the DNA strand. Cleaves the DNA backbone by beta-delta elimination to generate a single-strand break at the site of the removed base with both 3'- and 5'-phosphates. The chain is Formamidopyrimidine-DNA glycosylase from Roseobacter denitrificans (strain ATCC 33942 / OCh 114) (Erythrobacter sp. (strain OCh 114)).